Here is a 154-residue protein sequence, read N- to C-terminus: MAPARAGCCPLLLLLLGLRVAQIPVSAKPKDMTSSQWFKTQHVQPSPEACYSAMSNISKYIEWCKDLNTFLHEPFSSVATTCQTPNIACKNRHKNCHQSSGPMSLTMCELTSGKYPNCRYKEKHLNAPYIVACDPPQQGDPGYPLVPVHLDKVV.

The signal sequence occupies residues 1 to 27 (MAPARAGCCPLLLLLLGLRVAQIPVSA). His-42 serves as the catalytic Proton acceptor. 3 cysteine pairs are disulfide-bonded: Cys-64–Cys-118, Cys-82–Cys-133, and Cys-89–Cys-96. Substrate is bound by residues 65–69 (KDLNT) and Lys-90. His-149 (proton donor) is an active-site residue.

Belongs to the pancreatic ribonuclease family.

It is found in the secreted. In terms of biological role, has a low ribonuclease activity. The polypeptide is Ribonuclease 8 (RNASE8) (Miopithecus talapoin (Angolan talapoin)).